Consider the following 575-residue polypeptide: Physarolisin (575 aa).

The N-terminal stretch at 1-18 (MRLLSLLFLLGLATLSFA) is a signal peptide. A propeptide spans 19–173 (VRSQWAQQGR…SIKNARTQVG (155 aa)) (removed in mature form). Residues 179 to 574 (YIVPYVIFDL…SKLLAFVQTL (396 aa)) enclose the Peptidase S53 domain. Asn-200 is a glycosylation site (N-linked (GlcNAc...) asparagine). Active-site charge relay system residues include Glu-248 and Asp-252. Residues Asn-262, Asn-307, Asn-380, and Asn-453 are each glycosylated (N-linked (GlcNAc...) asparagine). Catalysis depends on Ser-484, which acts as the Charge relay system. Ca(2+)-binding residues include Asp-529, Ile-530, Gly-552, and Asp-554.

Ca(2+) serves as cofactor. In terms of processing, autocatalytically processed. Post-translationally, N-glycosylated.

The enzyme catalyses Milk clotting activity. Preferential cleavage of 8-Gly-|-Ser-9 in B chain of insulin most rapidly, followed by 11-Leu-|-Val-12, 19-Cys(SO(3)H)-|-Gly and 24-Phe-|-Phe-25. No action on Ac-Phe-Tyr(I)2.. Its activity is regulated as follows. Inhibited by diisopropylfluorophosphate (DFP) and diazoacetyl-D,L-norleucine methyl ester (DAN). This Physarum polycephalum (Slime mold) protein is Physarolisin.